The following is a 287-amino-acid chain: MIRMRTPSTLPFTKMHGAGNDFVVLDLRDGPDPSPELCRALADRHKGVGCDLVLGIREPRSARAVAAFDIWTADGSRSAQCGNGARCVAAWAVRAGLARGPRFALDSPSGTHEVDVLDADTFRVALAVPRFAPESIPLFGHDGEQDLYEADLGDGTRVRFAAVSMGNPHAVIEVDDTATAPVARVGRAVQASGLFLPTVNVGFARVESRDRVHLRVHEYGAGETLACGSGACAAAAVLMRRGRVDRNVSVVLPGGELRISWPDDAADVLMTGPAAFVYEGTFLHASV.

A substrate-binding site is contributed by Asn20. Residue Cys81 is the Proton donor of the active site. Substrate is bound by residues 82 to 83 (GN), Asn167, Asn200, and 218 to 219 (EY). The active-site Proton acceptor is the Cys227. Residue 228-229 (GS) participates in substrate binding.

Belongs to the diaminopimelate epimerase family. In terms of assembly, monomer.

Its subcellular location is the cytoplasm. The catalysed reaction is O-ureido-L-serine = O-ureido-D-serine. With respect to regulation, inhibited by thiol-inactivating reagents such as iodoacetamide and Hg(2+) ions. In terms of biological role, involved in the biosynthesis of the antibiotic D-cycloserine (DCS), a cyclic structural analog of D-alanine, used as an antitubercular agent. Catalyzes the stereoinversion of O-ureido-L-serine to O-ureido-D-serine. The polypeptide is O-ureido-serine racemase (Streptomyces lavendulae).